The chain runs to 203 residues: Reticulon-like protein B12 (203 aa).

The Reticulon domain maps to 24 to 203; sequence VADVMLWRKK…WANPENKKLS (180 aa). Helical transmembrane passes span 34–54, 55–75, and 132–152; these read NVSV…EAFA, YTIF…LFLW, and VAVS…QTLC.

Its subcellular location is the endoplasmic reticulum membrane. This Arabidopsis thaliana (Mouse-ear cress) protein is Reticulon-like protein B12 (RTNLB12).